Here is a 757-residue protein sequence, read N- to C-terminus: Xaa-Pro dipeptidyl-peptidase (757 aa).

Catalysis depends on charge relay system residues Ser348, Asp468, and His498.

The protein belongs to the peptidase S15 family. In terms of assembly, homodimer.

Its subcellular location is the cytoplasm. It catalyses the reaction Hydrolyzes Xaa-Pro-|- bonds to release unblocked, N-terminal dipeptides from substrates including Ala-Pro-|-p-nitroanilide and (sequentially) Tyr-Pro-|-Phe-Pro-|-Gly-Pro-|-Ile.. Its function is as follows. Removes N-terminal dipeptides sequentially from polypeptides having unsubstituted N-termini provided that the penultimate residue is proline. The sequence is that of Xaa-Pro dipeptidyl-peptidase from Streptococcus pneumoniae (strain ATCC BAA-255 / R6).